A 430-amino-acid chain; its full sequence is 5-methylthioadenosine/S-adenosylhomocysteine deaminase (430 aa).

The Zn(2+) site is built by H59 and H61. 2 residues coordinate substrate: E88 and H181. Residue H208 participates in Zn(2+) binding. Substrate contacts are provided by E211 and D296. Residue D296 coordinates Zn(2+).

It belongs to the metallo-dependent hydrolases superfamily. MTA/SAH deaminase family. It depends on Zn(2+) as a cofactor.

The catalysed reaction is S-adenosyl-L-homocysteine + H2O + H(+) = S-inosyl-L-homocysteine + NH4(+). It carries out the reaction S-methyl-5'-thioadenosine + H2O + H(+) = S-methyl-5'-thioinosine + NH4(+). In terms of biological role, catalyzes the deamination of 5-methylthioadenosine and S-adenosyl-L-homocysteine into 5-methylthioinosine and S-inosyl-L-homocysteine, respectively. Is also able to deaminate adenosine. The polypeptide is 5-methylthioadenosine/S-adenosylhomocysteine deaminase (Aquifex aeolicus (strain VF5)).